Reading from the N-terminus, the 1116-residue chain is Probable chitinase LysM11 (1116 aa).

Residues 233 to 283 (GTYTIQTNDNCAEIAAHFGVTQDDIYDLNEDTWGWAGCGTNDLKADQVICL) form the LysM domain. Positions 346–719 (FYHVAYFEVF…LGVDPDSDEA (374 aa)) constitute a GH18 domain. Catalysis depends on glutamate 466, which acts as the Proton donor. Chitin-binding residues include tyrosine 467 and tryptophan 701.

It belongs to the glycosyl hydrolase 18 family. Chitinase class V subfamily.

It carries out the reaction Random endo-hydrolysis of N-acetyl-beta-D-glucosaminide (1-&gt;4)-beta-linkages in chitin and chitodextrins.. Functionally, probable chitinase involved in the degradation of chitin, a component of the cell walls of fungi and exoskeletal elements of some animals (including worms and arthropods). Might be involved in manipulation of host defenses for successful infection. This Penicillium expansum (Blue mold rot fungus) protein is Probable chitinase LysM11.